The following is a 116-amino-acid chain: uncharacterized protein (116 aa).

The interval 77–116 (SATSHYPKADDPQRFARSVSRGPSRVRRPARNSASRPVRR) is disordered.

This is an uncharacterized protein from Frog virus 3 (isolate Goorha) (FV-3).